We begin with the raw amino-acid sequence, 513 residues long: Arabinoxylan arabinofuranohydrolase (513 aa).

The first 26 residues, 1 to 26 (MRKKCSVCLWILVLLLSCLSGKSAYA), serve as a signal peptide directing secretion. Asp-50 serves as the catalytic Proton acceptor. Catalysis depends on Glu-251, which acts as the Proton donor. A substrate-binding site is contributed by Asn-314. The 130-residue stretch at 382–511 (NRVEAETFAW…LFNFDYWQFT (130 aa)) folds into the CBM6 domain. Positions 385, 387, 409, 410, and 506 each coordinate Ca(2+).

The protein resides in the secreted. It catalyses the reaction Hydrolysis of terminal non-reducing alpha-L-arabinofuranoside residues in alpha-L-arabinosides.. It participates in glycan degradation; xylan degradation. Cleaves arabinose units from O-2- or O-3-monosubstituted xylose residues, thereby assisting in arabinoxylan (AX) and short-chain arabinoxylo-oligosaccharide (AXOS) degradation. Is more active on wheat bran AXOS than on wheat water-extractable AX and rye water-extractable AX. Does not display endoxylanase, xylosidase or arabinanase activity. The sequence is that of Arabinoxylan arabinofuranohydrolase (xynD) from Bacillus subtilis (strain 168).